A 342-amino-acid polypeptide reads, in one-letter code: tRNA dimethylallyltransferase (342 aa).

39 to 46 (GPTGSGKT) contacts ATP. 41–46 (TGSGKT) contacts substrate. The interaction with substrate tRNA stretch occupies residues 64 to 67 (DSMQ).

Belongs to the IPP transferase family. As to quaternary structure, monomer. Mg(2+) serves as cofactor.

It catalyses the reaction adenosine(37) in tRNA + dimethylallyl diphosphate = N(6)-dimethylallyladenosine(37) in tRNA + diphosphate. Functionally, catalyzes the transfer of a dimethylallyl group onto the adenine at position 37 in tRNAs that read codons beginning with uridine, leading to the formation of N6-(dimethylallyl)adenosine (i(6)A). The protein is tRNA dimethylallyltransferase of Chlamydia felis (strain Fe/C-56) (Chlamydophila felis).